Reading from the N-terminus, the 138-residue chain is Large ribosomal subunit protein uL16 (138 aa).

Basic residues predominate over residues Met1–Gln13. The segment at Met1–Gly24 is disordered.

It belongs to the universal ribosomal protein uL16 family. Part of the 50S ribosomal subunit.

In terms of biological role, binds 23S rRNA and is also seen to make contacts with the A and possibly P site tRNAs. In Bordetella bronchiseptica (strain ATCC BAA-588 / NCTC 13252 / RB50) (Alcaligenes bronchisepticus), this protein is Large ribosomal subunit protein uL16.